The chain runs to 355 residues: Tyrosine recombinase XerC (355 aa).

A Core-binding (CB) domain is found at 4 to 89 (TQFDGDIDSF…AVRGFFAWAY (86 aa)). The interval 138–180 (DDGGAAAASGSGKAAGKTADKSADTVNRSEAPARADKRDNARV) is disordered. The span at 141–154 (GAAAASGSGKAAGK) shows a compositional bias: low complexity. Residues 158 to 349 (KSADTVNRSE…SIEQLKNRYG (192 aa)) form the Tyr recombinase domain. A compositionally biased stretch (basic and acidic residues) spans 168–178 (APARADKRDNA). Catalysis depends on residues arginine 200, lysine 224, histidine 301, arginine 304, and histidine 327. The active-site O-(3'-phospho-DNA)-tyrosine intermediate is tyrosine 336.

Belongs to the 'phage' integrase family. XerC subfamily. As to quaternary structure, forms a cyclic heterotetrameric complex composed of two molecules of XerC and two molecules of XerD.

It is found in the cytoplasm. Site-specific tyrosine recombinase, which acts by catalyzing the cutting and rejoining of the recombining DNA molecules. The XerC-XerD complex is essential to convert dimers of the bacterial chromosome into monomers to permit their segregation at cell division. It also contributes to the segregational stability of plasmids. The polypeptide is Tyrosine recombinase XerC (Bifidobacterium longum subsp. infantis (strain ATCC 15697 / DSM 20088 / JCM 1222 / NCTC 11817 / S12)).